We begin with the raw amino-acid sequence, 487 residues long: Melanopsin (487 aa).

The tract at residues 1–37 is disordered; sequence MNPPSGPRTQEPSCVATPASPSRWDGYRSSTSSLDQP. Topologically, residues 1 to 67 are extracellular; sequence MNPPSGPRTQ…VDVPDHAHYT (67 aa). The helical transmembrane segment at 68–88 threads the bilayer; it reads LGTVILLVGLTGILGNLMVIY. Residues 89-102 lie on the Cytoplasmic side of the membrane; it reads TFCRSRGLRTPANM. A helical transmembrane segment spans residues 103–123; the sequence is FIINLAVSDFFMSFTQAPVFF. The Extracellular segment spans residues 124–139; sequence ASSLHKRWLFGEAGCE. A disulfide bond links cysteine 138 and cysteine 216. The chain crosses the membrane as a helical span at residues 140–160; it reads FYAFCGALFGITSMITLMAIA. The Cytoplasmic segment spans residues 161 to 183; it reads LDRYLVITHPLATIGVVSKRRAA. A helical membrane pass occupies residues 184-204; the sequence is LVLLGVWLYALAWSLPPFFGW. The Extracellular segment spans residues 205–233; sequence SAYVPEGLLTSCSWDYMSFTPSVRAYTML. Residues 234–254 form a helical membrane-spanning segment; the sequence is LFCFVFFLPLLVIVYCYIFIF. Residues 255-291 lie on the Cytoplasmic side of the membrane; sequence RAIRETGQALQTFRACEGGGRSPRQRQRLQREWKMAK. The helical transmembrane segment at 292–312 threads the bilayer; the sequence is IELLVILLFVLSWAPYSIVAL. The Extracellular segment spans residues 313–327; that stretch reads MAFAGYAHVLTPYMN. Residues 328–348 traverse the membrane as a helical segment; that stretch reads SVPAVIAKASAIHNPIIYAIT. Lysine 335 bears the N6-(retinylidene)lysine mark. Residues 349–487 are Cytoplasmic-facing; that stretch reads HPKYRMAIAQ…LPLHPGWAFH (139 aa). The tract at residues 436–459 is disordered; it reads CSQGLEDREAKAPVRPQGREAETP. The span at 440 to 457 shows a compositional bias: basic and acidic residues; the sequence is LEDREAKAPVRPQGREAE.

Belongs to the G-protein coupled receptor 1 family. Opsin subfamily. As to expression, eye. Expression is restricted within the ganglion cell layer.

The protein resides in the cell membrane. The protein localises to the cell projection. Its subcellular location is the axon. It is found in the dendrite. It localises to the perikaryon. Its function is as follows. Photoreceptor that binds cis-retinaldehydes. Contributes to pupillar reflex, photoentrainment and other non-image forming responses to light. May be involved in the optokinetic visual tracking response. May be involved in the regulation of retinal hyaloid vessel growth and regression. The chain is Melanopsin (OPN4) from Felis catus (Cat).